Here is a 123-residue protein sequence, read N- to C-terminus: Putative hypoxanthine phosphoribosyltransferase (123 aa).

Functionally, may play a role in purine salvage. The polypeptide is Putative hypoxanthine phosphoribosyltransferase (Methanosarcina mazei (strain ATCC BAA-159 / DSM 3647 / Goe1 / Go1 / JCM 11833 / OCM 88) (Methanosarcina frisia)).